The following is a 202-amino-acid chain: Putative pre-16S rRNA nuclease (202 aa).

2 disordered regions span residues 1-27 and 170-202; these read MSGS…GVRI and GCAA…SDER. The segment covering 9-20 has biased composition (basic and acidic residues); the sequence is GDSRPGDSRPGD.

Belongs to the YqgF nuclease family.

The protein localises to the cytoplasm. Its function is as follows. Could be a nuclease involved in processing of the 5'-end of pre-16S rRNA. The polypeptide is Putative pre-16S rRNA nuclease (Frankia casuarinae (strain DSM 45818 / CECT 9043 / HFP020203 / CcI3)).